The following is a 243-amino-acid chain: uncharacterized protein (243 aa).

This is an uncharacterized protein from Ureaplasma parvum serovar 3 (strain ATCC 700970).